Reading from the N-terminus, the 161-residue chain is Troponin C, slow skeletal and cardiac muscles (161 aa).

Residue Met-1 is modified to N-acetylmethionine. EF-hand domains follow at residues 16–51, 52–87, 92–127, and 128–161; these read QKNEFKAAFDIFVLGAEDGCISTKELGKVMRMLGQN, PTPEELQEMIDEVDEDGSGTVDFDEFLVMMVRCMKD, KSEEELSDLFRMFDKNADGYIDLEELKIMLQATGET, and ITEDDIEELMKDGDKNNDGRIDYDEFLEFMKGVE. Ca(2+) is bound by residues Asp-65, Asp-67, Ser-69, Thr-71, and Glu-76. At Ser-98 the chain carries Phosphoserine. Residues Asp-105, Asn-107, Asp-109, Tyr-111, Glu-116, Asp-141, Asn-143, Asp-145, Arg-147, and Glu-152 each contribute to the Ca(2+) site.

This sequence belongs to the troponin C family.

In terms of biological role, troponin is the central regulatory protein of striated muscle contraction. Tn consists of three components: Tn-I which is the inhibitor of actomyosin ATPase, Tn-T which contains the binding site for tropomyosin and Tn-C. The binding of calcium to Tn-C abolishes the inhibitory action of Tn on actin filaments. This Bos taurus (Bovine) protein is Troponin C, slow skeletal and cardiac muscles (TNNC1).